The chain runs to 570 residues: NADPH oxidase 2 (570 aa).

The Cytoplasmic segment spans residues 2–9; sequence GNWAVNEG. Residues 10–36 traverse the membrane as a helical segment; that stretch reads LSIFVILVWLGLNVFLFINYYKVYDDG. Residues 37–46 lie on the Extracellular side of the membrane; that stretch reads PKYNYTRKLL. N-linked (GlcNAc...) asparagine glycosylation occurs at Asn-40. Residues 47–72 traverse the membrane as a helical segment; it reads GSALALARAPAACLNFNCMLILLPVC. The 233-residue stretch at 54-286 folds into the Ferric oxidoreductase domain; the sequence is RAPAACLNFN…MFLYLCERLV (233 aa). Topologically, residues 73–95 are cytoplasmic; the sequence is RNLLSFLRGSSACCSTRIRRQLD. Residues 96-130 form a helical membrane-spanning segment; that stretch reads RNLTFHKMVAWMIALHTAIHTIAHLFNVEWCVNAR. Residues His-101 and His-115 each contribute to the heme b site. Over 131 to 163 the chain is Extracellular; that stretch reads VGISDRYSIALSDIGDNENEEYLNFAREKIKNP. Residues Lys-159 and Lys-161 each participate in a glycyl lysine isopeptide (Lys-Gly) (interchain with G-Cter in ubiquitin) cross-link. Residues 164 to 194 traverse the membrane as a helical segment; the sequence is EGGLYVAVTRLAGITGIVITLCLILIITSST. The Cytoplasmic portion of the chain corresponds to 195 to 203; it reads KTIRRSYFE. Residues Arg-199 and Ser-200 each coordinate FAD. A helical transmembrane segment spans residues 204 to 222; sequence VFWYTHHLFVIFFIGLAIH. 5 residues coordinate heme b: Trp-206, His-209, His-222, Arg-226, and Ile-227. The Extracellular segment spans residues 223-267; the sequence is GAERIVRGQTAESLEEHNLDICADKIEEWGKIKECPVPKFAGNPP. Residue Lys-255 forms a Glycyl lysine isopeptide (Lys-Gly) (interchain with G-Cter in ubiquitin) linkage. Residues Met-268, Tyr-280, and Arg-287 each coordinate heme b. The helical transmembrane segment at 268–285 threads the bilayer; the sequence is MTWKWIVGPMFLYLCERL. The Cytoplasmic portion of the chain corresponds to 286–570; sequence VRFWRSQQKV…VHFIFNKENF (285 aa). The FAD-binding FR-type domain occupies 287–397; it reads RFWRSQQKVV…DGPFGTASED (111 aa). Residues Lys-294, Lys-299, Lys-306, Lys-328, and Lys-334 each participate in a glycyl lysine isopeptide (Lys-Gly) (interchain with G-Cter in ubiquitin) cross-link. FAD contacts are provided by Trp-337, His-338, Pro-339, Thr-341, His-354, Arg-356, Trp-361, and Thr-362. Lys-381 is covalently cross-linked (Glycyl lysine isopeptide (Lys-Gly) (interchain with G-Cter in ubiquitin)). Positions 411, 446, and 481 each coordinate NADPH. A Glycyl lysine isopeptide (Lys-Gly) (interchain with G-Cter in ubiquitin) cross-link involves residue Lys-506. Arg-513 is a binding site for NADPH. A Glycyl lysine isopeptide (Lys-Gly) (interchain with G-Cter in ubiquitin) cross-link involves residue Lys-567.

Component of the phagocyte NADPH oxidase core complex/cytochrome b558 complex, composed of CYBB (heavy chain (beta)) and CYBA (light chain (alpha)). Component of the phagocyte NADPH oxidase complex composed of an obligatory core heterodimer formed by the membrane proteins CYBA and CYBB and the cytosolic regulatory subunits NCF1/p47-phox, NCF2/p67-phox, NCF4/p40-phox and the small GTPase RAC1 or RAC2. Interacts with NCF1 (phosphorylated form). Interacts with NCF2; the interaction is enhanced in the presence of GBP7. Interacts with RAC2. Interacts with RAC1. Interacts with calprotectin (S100A8/9). Interacts with NRROS; the interaction is direct and impairs formation of a stable NADPH oxidase complex. Interacts with CYBC1; CYBC1 may act as a chaperone stabilizing Cytochrome b-245 heterodimer. The CYBA:CYBB complex interacts with GBP7. The cofactor is FAD. Glycosylated. Post-translationally, phosphorylated on Ser and Thr residues by PKC during neutrophils activation. Phosphorylation enhances the NADPH oxidase activity and stimulates its interaction with RAC2, NCF2/p67-phox, and NCF1/p47-phox. In terms of processing, undergoes 'Lys-48'-linked polyubiquitination, likely by RNF145, triggering endoplasmic reticulum-associated degradation.

It localises to the cell membrane. It carries out the reaction NADPH + 2 O2 = 2 superoxide + NADP(+) + H(+). Its function is as follows. Catalytic subunit of the phagocyte NADPH oxidase complex that mediates the transfer of electrons from cytosolic NADPH to O2 to produce the superoxide anion (O2(-)). In the activated complex, electrons are first transferred from NADPH to flavin adenine dinucleotide (FAD) and subsequently transferred via two heme molecules to molecular oxygen, producing superoxide through an outer-sphere reaction. Activation of the NADPH oxidase complex is initiated by the assembly of cytosolic subunits of the NADPH oxidase complex with the core NADPH oxidase complex to form a complex at the plasma membrane or phagosomal membrane. This activation process is initiated by phosphorylation dependent binding of the cytosolic NCF1/p47-phox subunit to the C-terminus of CYBA/p22-phox. NADPH oxidase complex assembly is impaired through interaction with NRROS. The polypeptide is NADPH oxidase 2 (Mus musculus (Mouse)).